A 457-amino-acid polypeptide reads, in one-letter code: Adenylosuccinate synthetase isozyme 1 (457 aa).

The segment at 1-25 (MSGTRASNDRPPSAGGVKRGRLQHE) is disordered. GTP is bound by residues 42–48 (GDEGKGK) and 70–72 (GHT). Asp-43 acts as the Proton acceptor in catalysis. Mg(2+) contacts are provided by Asp-43 and Gly-70. Position 43 (Asp-43) interacts with substrate. Residues 43–46 (DEGK), 68–71 (NAGH), Thr-163, Arg-177, Asn-256, Thr-271, and Arg-335 each bind IMP. The active-site Proton donor is His-71. Residue 331-337 (VTTGRKR) participates in substrate binding. GTP contacts are provided by residues Arg-337, 363–365 (KLD), and 445–448 (GVGK).

The protein belongs to the adenylosuccinate synthetase family. In terms of assembly, homodimer. Mg(2+) serves as cofactor.

It localises to the cytoplasm. It catalyses the reaction IMP + L-aspartate + GTP = N(6)-(1,2-dicarboxyethyl)-AMP + GDP + phosphate + 2 H(+). Its pathway is purine metabolism; AMP biosynthesis via de novo pathway; AMP from IMP: step 1/2. Component of the purine nucleotide cycle (PNC), which interconverts IMP and AMP to regulate the nucleotide levels in various tissues, and which contributes to glycolysis and ammoniagenesis. Catalyzes the first committed step in the biosynthesis of AMP from IMP. In Bos taurus (Bovine), this protein is Adenylosuccinate synthetase isozyme 1.